A 1001-amino-acid polypeptide reads, in one-letter code: DNA topoisomerase 3-alpha (1001 aa).

Positions 35–179 (KVLCVAEKND…NLQVLRARFS (145 aa)) constitute a Toprim domain. In terms of domain architecture, Topo IA-type catalytic spans 197–617 (DQRVSDAVDV…QQVQKYKQVF (421 aa)). The O-(5'-phospho-DNA)-tyrosine intermediate role is filled by Tyr-362. A disordered region spans residues 400 to 424 (GGPTPRNGNKSDQAHPPIHPTKYTN). The C4-type zinc-finger motif lies at 658-685 (CPQCNKDMVLKTKKNGGFYLSCMGFPEC). Positions 774-792 (RMDNSQHPQPADSRQTGSS) are enriched in polar residues. Residues 774-810 (RMDNSQHPQPADSRQTGSSKALAQTLPPPTAAGESNS) form a disordered region. Cys-813, Cys-815, Cys-838, Cys-843, Cys-897, Cys-899, Cys-922, and Cys-930 together coordinate Zn(2+). GRF-type zinc fingers lie at residues 813-852 (CNCG…ADSP) and 897-939 (CLCS…VDEN). Residues 937–1001 (DENTAPGTSG…HTRPFCPQNR (65 aa)) are disordered. The span at 953–964 (DRGRTLESEARS) shows a compositional bias: basic and acidic residues.

It belongs to the type IA topoisomerase family. In terms of assembly, binds ssDNA. Interacts (via N-terminal region) with BLM; the interaction is direct. Directly interacts with RMI1. Component of the RMI complex, containing at least TOP3A, RMI1 and RMI2. The RMI complex interacts with BLM. It depends on Mg(2+) as a cofactor. In terms of tissue distribution, high expression is found in testis, heart, skeletal muscle and pancreas.

The protein localises to the mitochondrion matrix. It carries out the reaction ATP-independent breakage of single-stranded DNA, followed by passage and rejoining.. Its function is as follows. Releases the supercoiling and torsional tension of DNA introduced during the DNA replication and transcription by transiently cleaving and rejoining one strand of the DNA duplex. Introduces a single-strand break via transesterification at a target site in duplex DNA. The scissile phosphodiester is attacked by the catalytic tyrosine of the enzyme, resulting in the formation of a DNA-(5'-phosphotyrosyl)-enzyme intermediate and the expulsion of a 3'-OH DNA strand. The free DNA strand then undergoes passage around the unbroken strand thus removing DNA supercoils. Finally, in the religation step, the DNA 3'-OH attacks the covalent intermediate to expel the active-site tyrosine and restore the DNA phosphodiester backbone. As an essential component of the RMI complex it is involved in chromosome separation and the processing of homologous recombination intermediates to limit DNA crossover formation in cells. Has DNA decatenation activity. It is required for mtDNA decatenation and segregation after completion of replication, in a process that does not require BLM, RMI1 and RMI2. In Homo sapiens (Human), this protein is DNA topoisomerase 3-alpha (TOP3A).